The sequence spans 359 residues: Chorismate synthase (359 aa).

Position 47 (Arg47) interacts with NADP(+). FMN-binding positions include Arg123–Ser125, Gly283, Lys298–Ser302, and Arg326.

This sequence belongs to the chorismate synthase family. In terms of assembly, homotetramer. It depends on FMNH2 as a cofactor.

It carries out the reaction 5-O-(1-carboxyvinyl)-3-phosphoshikimate = chorismate + phosphate. The protein operates within metabolic intermediate biosynthesis; chorismate biosynthesis; chorismate from D-erythrose 4-phosphate and phosphoenolpyruvate: step 7/7. In terms of biological role, catalyzes the anti-1,4-elimination of the C-3 phosphate and the C-6 proR hydrogen from 5-enolpyruvylshikimate-3-phosphate (EPSP) to yield chorismate, which is the branch point compound that serves as the starting substrate for the three terminal pathways of aromatic amino acid biosynthesis. This reaction introduces a second double bond into the aromatic ring system. This Chlamydia caviae (strain ATCC VR-813 / DSM 19441 / 03DC25 / GPIC) (Chlamydophila caviae) protein is Chorismate synthase.